The sequence spans 566 residues: MKQFRVTNEGDIQTTLRGLEVLSVPFLNKGVAFTEEERKELGLKGFLPPKVLTIDDQAKRAYEQYSAQPDDLSKNVYLTALHDRNETLFYRLLNDHLGEMLPIVYTPTVGTAIQRYSHEYRKPRGLYLSIDDPDGMKEAFKQYKDQSDTIDLIVATDAEGILGIGDWGVGGIAISIGKLAVYTAAAGIDPSRVLAVVLDAGTNQESLLNDPLYVGNQHSRVRGERYDQFIDDYVALARETFPNALLHWEDFGAKNARSILKRYKDKVCTFNDDIQGTGAVSLAAVLSCAKASKVPLRDHRVVIFGAGTAGIGIAEQLREALVREGLSEEESYKRFWCIDRNGLLTDDMDQLLDFQKPYARSADEVKDYQRNGDGGGIDLLEVVRQAKPTILIGTSTVSGAFTEEIVKEMASHVKRPAILPMSNPTTLSEAKPEDLIEWTEGRALITTGSPFPPVEYNGVTYHIGQANNALVFPGLGLGTIVTKSKLITDGMFEACARAIAGMVNVGVPGAPMLPKVEDLRTVSATVAVEVAKTAMKEGVATEEPEDIIQAVQDAMWYPVYKPIRAI.

Y105 (proton donor) is an active-site residue. K178 (proton acceptor) is an active-site residue. Residues E249, D250, and D273 each coordinate a divalent metal cation. Residues 306–309, N423, and N468 each bind NAD(+); that span reads AGTA.

Belongs to the malic enzymes family. The cofactor is Mg(2+). Requires Mn(2+) as cofactor.

The enzyme catalyses (S)-malate + NAD(+) = pyruvate + CO2 + NADH. The catalysed reaction is oxaloacetate + H(+) = pyruvate + CO2. In terms of biological role, catalyzes the decarboxylation of malate to pyruvate. Can use NAD and NADP, but with a strong preference for NAD. Can also catalyze the decarboxylation of oxaloacetate. Involved in keeping the ATP levels high. This is NAD-dependent malic enzyme 3 (malS) from Bacillus subtilis (strain 168).